We begin with the raw amino-acid sequence, 216 residues long: Large ribosomal subunit protein uL3 (216 aa).

Gln157 is subject to N5-methylglutamine.

This sequence belongs to the universal ribosomal protein uL3 family. Part of the 50S ribosomal subunit. Forms a cluster with proteins L14 and L19. Methylated by PrmB.

Functionally, one of the primary rRNA binding proteins, it binds directly near the 3'-end of the 23S rRNA, where it nucleates assembly of the 50S subunit. The protein is Large ribosomal subunit protein uL3 of Xanthomonas axonopodis pv. citri (strain 306).